The primary structure comprises 548 residues: Chaperonin GroEL (548 aa).

Residues 30-33, lysine 51, 87-91, glycine 415, 479-481, and aspartate 495 contribute to the ATP site; these read TLGP, DGTTT, and NAA.

This sequence belongs to the chaperonin (HSP60) family. As to quaternary structure, forms a cylinder of 14 subunits composed of two heptameric rings stacked back-to-back. Interacts with the co-chaperonin GroES.

It is found in the cytoplasm. It catalyses the reaction ATP + H2O + a folded polypeptide = ADP + phosphate + an unfolded polypeptide.. Functionally, together with its co-chaperonin GroES, plays an essential role in assisting protein folding. The GroEL-GroES system forms a nano-cage that allows encapsulation of the non-native substrate proteins and provides a physical environment optimized to promote and accelerate protein folding. The chain is Chaperonin GroEL from Oleidesulfovibrio alaskensis (strain ATCC BAA-1058 / DSM 17464 / G20) (Desulfovibrio alaskensis).